A 324-amino-acid polypeptide reads, in one-letter code: Serpentine receptor class delta-30 (324 aa).

The next 7 helical transmembrane spans lie at 5–25 (IIHS…MYLA), 38–58 (AIIT…FFVM), 83–103 (ACYV…IWMI), 124–144 (VFVA…WFSF), 176–196 (ITLI…YIWI), 227–247 (FQVF…SMFT), and 258–278 (AISV…ILFV). The interval 290 to 324 (KQPKPHPEMCGPIRSNTRTTSISVTNNSSHLSSAH) is disordered. Over residues 303–324 (RSNTRTTSISVTNNSSHLSSAH) the composition is skewed to polar residues.

The protein belongs to the nematode receptor-like protein srd family.

The protein resides in the membrane. This chain is Serpentine receptor class delta-30 (srd-30), found in Caenorhabditis elegans.